A 118-amino-acid chain; its full sequence is Large ribosomal subunit protein uL22 (118 aa).

It belongs to the universal ribosomal protein uL22 family. As to quaternary structure, part of the 50S ribosomal subunit.

In terms of biological role, this protein binds specifically to 23S rRNA; its binding is stimulated by other ribosomal proteins, e.g. L4, L17, and L20. It is important during the early stages of 50S assembly. It makes multiple contacts with different domains of the 23S rRNA in the assembled 50S subunit and ribosome. Its function is as follows. The globular domain of the protein is located near the polypeptide exit tunnel on the outside of the subunit, while an extended beta-hairpin is found that lines the wall of the exit tunnel in the center of the 70S ribosome. This is Large ribosomal subunit protein uL22 from Leuconostoc mesenteroides subsp. mesenteroides (strain ATCC 8293 / DSM 20343 / BCRC 11652 / CCM 1803 / JCM 6124 / NCDO 523 / NBRC 100496 / NCIMB 8023 / NCTC 12954 / NRRL B-1118 / 37Y).